The primary structure comprises 248 residues: 3-deoxy-manno-octulosonate cytidylyltransferase (248 aa).

Belongs to the KdsB family.

The protein localises to the cytoplasm. The enzyme catalyses 3-deoxy-alpha-D-manno-oct-2-ulosonate + CTP = CMP-3-deoxy-beta-D-manno-octulosonate + diphosphate. The protein operates within nucleotide-sugar biosynthesis; CMP-3-deoxy-D-manno-octulosonate biosynthesis; CMP-3-deoxy-D-manno-octulosonate from 3-deoxy-D-manno-octulosonate and CTP: step 1/1. It participates in bacterial outer membrane biogenesis; lipopolysaccharide biosynthesis. Functionally, activates KDO (a required 8-carbon sugar) for incorporation into bacterial lipopolysaccharide in Gram-negative bacteria. This Escherichia coli (strain K12 / MC4100 / BW2952) protein is 3-deoxy-manno-octulosonate cytidylyltransferase.